The chain runs to 313 residues: Methionyl-tRNA formyltransferase (313 aa).

113–116 (SLLP) is a binding site for (6S)-5,6,7,8-tetrahydrofolate.

This sequence belongs to the Fmt family.

The catalysed reaction is L-methionyl-tRNA(fMet) + (6R)-10-formyltetrahydrofolate = N-formyl-L-methionyl-tRNA(fMet) + (6S)-5,6,7,8-tetrahydrofolate + H(+). Its function is as follows. Attaches a formyl group to the free amino group of methionyl-tRNA(fMet). The formyl group appears to play a dual role in the initiator identity of N-formylmethionyl-tRNA by promoting its recognition by IF2 and preventing the misappropriation of this tRNA by the elongation apparatus. This Francisella tularensis subsp. tularensis (strain FSC 198) protein is Methionyl-tRNA formyltransferase.